Reading from the N-terminus, the 165-residue chain is Cyanate hydratase (165 aa).

Catalysis depends on residues Arg106, Glu109, and Ser132.

It belongs to the cyanase family.

It carries out the reaction cyanate + hydrogencarbonate + 3 H(+) = NH4(+) + 2 CO2. In terms of biological role, catalyzes the reaction of cyanate with bicarbonate to produce ammonia and carbon dioxide. This is Cyanate hydratase from Laccaria bicolor (strain S238N-H82 / ATCC MYA-4686) (Bicoloured deceiver).